The sequence spans 117 residues: Large ribosomal subunit protein uL18 (117 aa).

This sequence belongs to the universal ribosomal protein uL18 family. As to quaternary structure, part of the 50S ribosomal subunit; part of the 5S rRNA/L5/L18/L25 subcomplex. Contacts the 5S and 23S rRNAs.

Its function is as follows. This is one of the proteins that bind and probably mediate the attachment of the 5S RNA into the large ribosomal subunit, where it forms part of the central protuberance. The chain is Large ribosomal subunit protein uL18 from Vibrio atlanticus (strain LGP32) (Vibrio splendidus (strain Mel32)).